The chain runs to 744 residues: Receptor-like serine/threonine-protein kinase ALE2 (744 aa).

A signal peptide spans 1-19 (MRNFAMLLLLILLLHSLAS). Topologically, residues 20 to 260 (FPICFARLFP…SQGIGFRTIA (241 aa)) are extracellular. The span at 59–68 (PAFSPNPSRI) shows a compositional bias: pro residues. Residues 59–79 (PAFSPNPSRIPPLRHKGHHRH) form a disordered region. Basic residues predominate over residues 70–79 (PLRHKGHHRH). N-linked (GlcNAc...) asparagine glycans are attached at residues Asn87, Asn186, Asn204, Asn243, and Asn249. A helical membrane pass occupies residues 261-281 (IIALSGFVLILVLVGAISIIV). Residues 282 to 744 (KWKKIGKSSN…HLWSGNGDWL (463 aa)) are Cytoplasmic-facing. The Protein kinase domain maps to 349 to 619 (FSAKRVLGEG…GEVVQALKLI (271 aa)). ATP is bound by residues 355 to 363 (LGEGGFGRV) and Lys377. Asp470 acts as the Proton acceptor in catalysis. Disordered regions lie at residues 681-705 (EDMENRPHSASSIPRVGGLILPNRS) and 722-744 (GSMSEHGGPSSSRHLWSGNGDWL).

Belongs to the protein kinase superfamily. Ser/Thr protein kinase family. In terms of processing, autophosphorylated and phosphorylated by ACR4.

Its subcellular location is the cell membrane. The enzyme catalyses L-seryl-[protein] + ATP = O-phospho-L-seryl-[protein] + ADP + H(+). The catalysed reaction is L-threonyl-[protein] + ATP = O-phospho-L-threonyl-[protein] + ADP + H(+). Its function is as follows. Required during the differentiation of the protoderm into shoots epidermis and cuticle. The chain is Receptor-like serine/threonine-protein kinase ALE2 (ALE2) from Arabidopsis thaliana (Mouse-ear cress).